The sequence spans 430 residues: Cholecystokinin receptor type A (430 aa).

The Extracellular segment spans residues Met-1–Pro-41. 3 N-linked (GlcNAc...) asparagine glycosylation sites follow: Asn-10, Asn-13, and Asn-24. A disulfide bridge connects residues Cys-18 and Cys-29. A helical transmembrane segment spans residues Ala-42–Ile-67. Topologically, residues Arg-68 to Asn-77 are cytoplasmic. A helical membrane pass occupies residues Ile-78–Leu-104. Over Lys-105–Lys-115 the chain is Extracellular. The cysteines at positions 114 and 196 are disulfide-linked. Residues Thr-116–Leu-137 traverse the membrane as a helical segment. Residues Glu-138–His-157 lie on the Cytoplasmic side of the membrane. Residues Ala-158–Ile-178 traverse the membrane as a helical segment. The Extracellular segment spans residues Tyr-179–His-210. N-linked (GlcNAc...) asparagine glycosylation is present at Asn-190. A helical transmembrane segment spans residues Thr-211–Leu-234. Residues Glu-235–Arg-315 are Cytoplasmic-facing. The helical transmembrane segment at Met-316 to Ala-336 threads the bilayer. Residues Trp-337–Gly-351 are Extracellular-facing. Residues Thr-352–Met-375 traverse the membrane as a helical segment. Residues Asn-376–Pro-430 are Cytoplasmic-facing. Cys-389 carries S-palmitoyl cysteine lipidation. The segment at Pro-396–Pro-430 is disordered. The segment covering Ala-413 to Pro-430 has biased composition (polar residues).

It belongs to the G-protein coupled receptor 1 family.

It is found in the cell membrane. Its function is as follows. Receptor for cholecystokinin. Mediates pancreatic growth and enzyme secretion, smooth muscle contraction of the gall bladder and stomach. Has a 1000-fold higher affinity for CCK rather than for gastrin. It modulates feeding and dopamine-induced behavior in the central and peripheral nervous system. This receptor mediates its action by association with G proteins that activate a phosphatidylinositol-calcium second messenger system. In Cavia porcellus (Guinea pig), this protein is Cholecystokinin receptor type A (CCKAR).